The sequence spans 375 residues: Leucoanthocyanidin dioxygenase 1 (375 aa).

In terms of domain architecture, Fe2OG dioxygenase spans 218–317 (LLLQLKINYY…RLSWVVFCEP (100 aa)). Fe cation contacts are provided by His-242, Asp-244, and His-298. Arg-308 contributes to the 2-oxoglutarate binding site.

Belongs to the iron/ascorbate-dependent oxidoreductase family. L-ascorbate is required as a cofactor. Fe(2+) serves as cofactor.

The catalysed reaction is a (2R,3S,4S)-leucoanthocyanidin + 2-oxoglutarate + O2 = a 4-H-anthocyanidin with a 3-hydroxy group + succinate + CO2 + 2 H2O. It participates in pigment biosynthesis; anthocyanin biosynthesis. In terms of biological role, involved in anthocyanin and protoanthocyanidin biosynthesis by catalyzing the oxidation of leucoanthocyanidins into anthocyanidins. This Oryza sativa subsp. japonica (Rice) protein is Leucoanthocyanidin dioxygenase 1.